A 680-amino-acid polypeptide reads, in one-letter code: tRNA 5-methylaminomethyl-2-thiouridine biosynthesis bifunctional protein MnmC (680 aa).

The tRNA (mnm(5)s(2)U34)-methyltransferase stretch occupies residues M1 to T251. The segment at I277–I680 is FAD-dependent cmnm(5)s(2)U34 oxidoreductase.

It in the N-terminal section; belongs to the methyltransferase superfamily. tRNA (mnm(5)s(2)U34)-methyltransferase family. This sequence in the C-terminal section; belongs to the DAO family. It depends on FAD as a cofactor.

The protein resides in the cytoplasm. It catalyses the reaction 5-aminomethyl-2-thiouridine(34) in tRNA + S-adenosyl-L-methionine = 5-methylaminomethyl-2-thiouridine(34) in tRNA + S-adenosyl-L-homocysteine + H(+). In terms of biological role, catalyzes the last two steps in the biosynthesis of 5-methylaminomethyl-2-thiouridine (mnm(5)s(2)U) at the wobble position (U34) in tRNA. Catalyzes the FAD-dependent demodification of cmnm(5)s(2)U34 to nm(5)s(2)U34, followed by the transfer of a methyl group from S-adenosyl-L-methionine to nm(5)s(2)U34, to form mnm(5)s(2)U34. The protein is tRNA 5-methylaminomethyl-2-thiouridine biosynthesis bifunctional protein MnmC of Aliivibrio fischeri (strain ATCC 700601 / ES114) (Vibrio fischeri).